A 467-amino-acid chain; its full sequence is ATP-dependent rRNA helicase rrp3 (467 aa).

The interval methionine 1 to lysine 48 is disordered. The Q motif motif lies at lysine 48–arginine 76. Residues isoleucine 79–valine 250 form the Helicase ATP-binding domain. An ATP-binding site is contributed by alanine 92 to threonine 99. The short motif at aspartate 198 to aspartate 201 is the DEAD box element. Positions threonine 262–methionine 422 constitute a Helicase C-terminal domain. Positions methionine 439–glycine 467 are disordered.

Belongs to the DEAD box helicase family. DDX47/RRP3 subfamily. In terms of assembly, interacts with the SSU processome.

The protein resides in the nucleus. The catalysed reaction is ATP + H2O = ADP + phosphate + H(+). Functionally, ATP-dependent rRNA helicase required for pre-ribosomal RNA processing. Involved in the maturation of the 35S-pre-rRNA and to its cleavage to mature 18S rRNA. In Aspergillus niger (strain ATCC MYA-4892 / CBS 513.88 / FGSC A1513), this protein is ATP-dependent rRNA helicase rrp3.